We begin with the raw amino-acid sequence, 918 residues long: NEDD4-like E3 ubiquitin-protein ligase WWP1 (918 aa).

Positions 1-116 (MATASPRSDT…THNRKLEKVK (116 aa)) constitute a C2 domain. Composition is skewed to polar residues over residues 150-164 (TNRS…QQNG), 209-219 (NGENTPSSPSQ), and 235-258 (SAPT…STMG). 2 disordered regions span residues 150–182 (TNRS…PRLP) and 209–360 (NGEN…PHGR). Over residues 266-281 (TTSTSNCTSTTTQEPP) the composition is skewed to low complexity. 4 consecutive WW domains span residues 345 to 378 (EALP…RPQP), 377 to 410 (QPLP…RPTM), 452 to 485 (GPLP…DPRT), and 492 to 525 (EPLP…DPRN). The interval 345-525 (EALPSGWEQR…RTTTFKDPRN (181 aa)) is interaction with ERBB4. Positions 345 to 527 (EALPSGWEQR…TTFKDPRNGK (183 aa)) are required for interaction with and ubiquitination of AMOTL2. Required for interaction with YAP1. An HECT domain is found at 584–918 (KPYDLRRRLY…IEETEGFGQE (335 aa)). The active-site Glycyl thioester intermediate is cysteine 886.

As to quaternary structure, interacts with the Crumbs complex components PALS1 and PATJ; interaction with the Crumbs complex is enhanced by WWP1's interaction with AMOTL2 and facilitates WWP1 localization to the plasma membrane. Interaction with the Crumbs complex promotes WWP1 monoubiquitination of AMOTL2, which activates the Hippo signaling pathway. Binds SCNN1A, SCNN1B, SCNN1G, WBP1, WBP2, DRPLA and adenovirus type 2 PIII. Interacts with TGIF. Binds KLF2 AND HIVEP3. Interacts with RNF11. Interacts with SPART. Interacts with NDFIP1 and NDFIP2; this interaction activates the E3 ubiquitin-protein ligase. Interacts with ERBB4 isoforms JM-B CYT-1 and JM-A CYT-1. Does not interact with ERB4 isoform JMA-A CYT-2. Interacts with SMAD1, SMAD2, SMAD3, SMAD5, SMAD6, SMAD7, TGFBR1 and TGFBR2. Associates with the TGFBR1:TGFBR2 receptor complex in presence of SMAD7. Interacts with SKIL isoform 1. Interacts with TP63 isoform 1 and isoform 2. Interacts (via WW domains) with ARRDC1, ARRDC2 and ARRDC3. In terms of processing, auto-ubiquitinated and ubiquitinated by RNF11.

The protein resides in the cytoplasm. The protein localises to the cell membrane. It localises to the nucleus. It is found in the cell junction. The catalysed reaction is S-ubiquitinyl-[E2 ubiquitin-conjugating enzyme]-L-cysteine + [acceptor protein]-L-lysine = [E2 ubiquitin-conjugating enzyme]-L-cysteine + N(6)-ubiquitinyl-[acceptor protein]-L-lysine.. It participates in protein modification; protein ubiquitination. Its activity is regulated as follows. Activated by NDFIP1- and NDFIP2-binding. Its function is as follows. E3 ubiquitin-protein ligase which accepts ubiquitin from an E2 ubiquitin-conjugating enzyme in the form of a thioester and then directly transfers the ubiquitin to targeted substrates. Ubiquitinates and promotes degradation of SMAD2 in response to TGF-beta signaling, which requires interaction with TGIF. Ubiquitinates ERBB4 isoforms JM-A CYT-1 and JM-B CYT-1, KLF2, KLF5 and TP63 and promotes their proteasomal degradation. Ubiquitinates RNF11 without targeting it for degradation. Ubiquitinates and promotes degradation of TGFBR1; the ubiquitination is enhanced by SMAD7. Ubiquitinates SMAD6 and SMAD7. Activates the Hippo signaling pathway in response to cell contact inhibition and recruitment to the Crumbs complex at the cell membrane. Monoubiquitinates AMOTL2 which facilitates its interaction with and activation of LATS2. LATS2 then phosphorylates YAP1, excluding it from the nucleus and therefore ultimately represses YAP1-driven transcription of target genes. This Mus musculus (Mouse) protein is NEDD4-like E3 ubiquitin-protein ligase WWP1 (Wwp1).